A 136-amino-acid chain; its full sequence is Large ribosomal subunit protein eL27 (136 aa).

A KOW domain is found at 5–40 (MKPGKVVLVLAGRYSGRKAVIVKNIDDGTSDRPYSH). K27 and K93 each carry N6-acetyllysine.

This sequence belongs to the eukaryotic ribosomal protein eL27 family. As to quaternary structure, component of the large ribosomal subunit. Interacts with RRP1B. Component of the large ribosomal subunit. Interacts with RRP1B. Interacts with DHX33.

Its subcellular location is the cytoplasm. It is found in the cytosol. It localises to the rough endoplasmic reticulum. In terms of biological role, component of the large ribosomal subunit. Required for proper rRNA processing and maturation of 28S and 5.8S rRNAs. In Bos taurus (Bovine), this protein is Large ribosomal subunit protein eL27 (RPL27).